Here is an 87-residue protein sequence, read N- to C-terminus: Large ribosomal subunit protein bL27 (87 aa).

The disordered stretch occupies residues Met1–Gly22.

This sequence belongs to the bacterial ribosomal protein bL27 family.

This chain is Large ribosomal subunit protein bL27, found in Nitratidesulfovibrio vulgaris (strain DP4) (Desulfovibrio vulgaris).